The chain runs to 129 residues: Small ribosomal subunit protein uS9 (129 aa).

This sequence belongs to the universal ribosomal protein uS9 family.

In Gemmatimonas aurantiaca (strain DSM 14586 / JCM 11422 / NBRC 100505 / T-27), this protein is Small ribosomal subunit protein uS9.